Here is a 583-residue protein sequence, read N- to C-terminus: CD166 antigen (583 aa).

The signal sequence occupies residues 1 to 27; it reads MASKVSPSCRLVFCLLISAAVLRPGLG. Ig-like V-type domains follow at residues 28-120 and 125-234; these read WYTV…TEDN and PTLV…KTIY. The Extracellular segment spans residues 28-527; the sequence is WYTVNSAYGD…NREKVNDQAK (500 aa). Intrachain disulfides connect Cys-43/Cys-113 and Cys-157/Cys-220. Asn-95, Asn-167, Asn-265, Asn-306, Asn-361, Asn-457, Asn-480, and Asn-499 each carry an N-linked (GlcNAc...) asparagine glycan. 3 consecutive Ig-like C2-type domains span residues 245-328, 333-409, and 416-501; these read PTEQ…TTIT, DLSL…ESLT, and PQIK…LNVS. 3 disulfides stabilise this stretch: Cys-270/Cys-313, Cys-354/Cys-392, and Cys-435/Cys-485. Residues 528-549 form a helical membrane-spanning segment; sequence LIVGIVVGLLLAALVAGVVYWL. Topologically, residues 550-583 are cytoplasmic; that stretch reads YMKKSKTASKHVNKDLGNMEENKKLEENNHKTEA. The interval 562–583 is disordered; it reads NKDLGNMEENKKLEENNHKTEA. Residues 569–583 are compositionally biased toward basic and acidic residues; that stretch reads EENKKLEENNHKTEA.

Homodimer. Interacts (via extracellular domain) with CD6 (via extracellular domain). Homodimerization and interaction with CD6 involve the same region and cannot occur simultaneously. The affinity for CD6 is much higher than the affinity for self-association. Interacts (via glycosylated extracellular domain) with LGALS1 and LGALS3. Interaction with LGALS1 or LGALS3 inhibits interaction with CD6. Post-translationally, glycosylated. Detected on brain motor neurons, in differentiating retinal ganglion cells and in adult retina. Detected on leukocytes and on lymphatic endothelial cells. Detected in spleen B cells and T-cells (at protein level). Detected in adult brain and embryonic spinal cord. Expressed at high levels in the brain, and lung, and at lower levels in the liver, and the kidney, as well as by activated leukocytes.

It is found in the cell membrane. Its subcellular location is the cell projection. The protein localises to the axon. It localises to the dendrite. Cell adhesion molecule that mediates both heterotypic cell-cell contacts via its interaction with CD6, as well as homotypic cell-cell contacts. Promotes T-cell activation and proliferation via its interactions with CD6. Contributes to the formation and maturation of the immunological synapse via its interactions with CD6. Mediates homotypic interactions with cells that express ALCAM. Mediates attachment of dendritic cells onto endothelial cells via homotypic interaction. Inhibits endothelial cell migration and promotes endothelial tube formation via homotypic interactions. Required for normal organization of the lymph vessel network. Required for normal hematopoietic stem cell engraftment in the bone marrow. Plays a role in hematopoiesis; required for normal numbers of hematopoietic stem cells in bone marrow. Promotes in vitro osteoblast proliferation and differentiation. Promotes neurite extension, axon growth and axon guidance; axons grow preferentially on surfaces that contain ALCAM. Mediates outgrowth and pathfinding for retinal ganglion cell axons. In Mus musculus (Mouse), this protein is CD166 antigen (Alcam).